The following is a 225-amino-acid chain: Histone H1.5 (225 aa).

Positions 1-23 (MSDVAVAETPAVKTPTKASKATK) are disordered. At serine 2 the chain carries N-acetylserine. Low complexity predominate over residues 9 to 19 (TPAVKTPTKAS). One can recognise an H15 domain in the interval 37 to 113 (AHPPFINMIT…GANGRFRLAV (77 aa)). Residues 145-156 (KKTVAKKTGDKV) are compositionally biased toward basic and acidic residues. The segment at 145–225 (KKTVAKKTGD…RKAVGTAPKA (81 aa)) is disordered. Over residues 157–175 (KKVKSPKRIAKPAVKKVTK) the composition is skewed to basic residues. The segment covering 176–208 (KAAAPTKSAANETAPKKAAATEAAPKKAAVTKA) has biased composition (low complexity).

The protein belongs to the histone H1/H5 family.

The protein localises to the nucleus. The protein resides in the chromosome. Functionally, histones H1 are necessary for the condensation of nucleosome chains into higher-order structures. In Caenorhabditis elegans, this protein is Histone H1.5 (hil-5).